Consider the following 722-residue polypeptide: Ribosomal RNA large subunit methyltransferase K/L (722 aa).

The 113-residue stretch at 55–167 (TGYRACLWSR…GNEGTLYLDL (113 aa)) folds into the THUMP domain.

This sequence belongs to the methyltransferase superfamily. RlmKL family.

Its subcellular location is the cytoplasm. The enzyme catalyses guanosine(2445) in 23S rRNA + S-adenosyl-L-methionine = N(2)-methylguanosine(2445) in 23S rRNA + S-adenosyl-L-homocysteine + H(+). It carries out the reaction guanosine(2069) in 23S rRNA + S-adenosyl-L-methionine = N(2)-methylguanosine(2069) in 23S rRNA + S-adenosyl-L-homocysteine + H(+). Specifically methylates the guanine in position 2445 (m2G2445) and the guanine in position 2069 (m7G2069) of 23S rRNA. This Desulfotalea psychrophila (strain LSv54 / DSM 12343) protein is Ribosomal RNA large subunit methyltransferase K/L.